Consider the following 160-residue polypeptide: Transcription elongation factor GreA (160 aa).

A coiled-coil region spans residues 1–72 (MAEKTYPMTL…QISSLETKIR (72 aa)).

The protein belongs to the GreA/GreB family.

Its function is as follows. Necessary for efficient RNA polymerase transcription elongation past template-encoded arresting sites. The arresting sites in DNA have the property of trapping a certain fraction of elongating RNA polymerases that pass through, resulting in locked ternary complexes. Cleavage of the nascent transcript by cleavage factors such as GreA or GreB allows the resumption of elongation from the new 3'terminus. GreA releases sequences of 2 to 3 nucleotides. This is Transcription elongation factor GreA from Streptococcus sanguinis (strain SK36).